A 282-amino-acid polypeptide reads, in one-letter code: HTH-type transcriptional activator RhaR (282 aa).

In terms of domain architecture, HTH araC/xylS-type spans 179-277 (DKLITALANS…GMTPSQWRHL (99 aa)). 2 DNA-binding regions (H-T-H motif) span residues 196-217 (DAFCQQEQCSERVLRQQFRAQT) and 244-267 (VSEISMQCGFEDSNYFSVVFTRET).

As to quaternary structure, binds DNA as a dimer.

The protein resides in the cytoplasm. In terms of biological role, activates expression of the rhaSR operon in response to L-rhamnose. The sequence is that of HTH-type transcriptional activator RhaR from Salmonella typhi.